Reading from the N-terminus, the 348-residue chain is DnaJ homolog subfamily B member 5 (348 aa).

In terms of domain architecture, J spans D4–G68.

This chain is DnaJ homolog subfamily B member 5 (DNAJB5), found in Bos taurus (Bovine).